A 302-amino-acid polypeptide reads, in one-letter code: tRNA demethylase abh1 (302 aa).

Residues W142 and 149–151 each bind substrate; that span reads YDW. The 113-residue stretch at 187-299 folds into the Fe2OG dioxygenase domain; sequence KAEAAIVNFY…RVNFNVRQVR (113 aa). Position 194–196 (194–196) interacts with 2-oxoglutarate; sequence NFY. Residues H205 and D207 each coordinate Fe cation. R235 is a binding site for substrate. Position 261 (H261) interacts with Fe cation. Residue 290-296 coordinates 2-oxoglutarate; that stretch reads RVNFNVR.

This sequence belongs to the alkB family. The cofactor is Fe(2+).

The protein localises to the cytoplasm. The protein resides in the nucleus. The catalysed reaction is an N(1)-methyladenosine in tRNA + 2-oxoglutarate + O2 = an adenosine in tRNA + formaldehyde + succinate + CO2. It carries out the reaction N(1)-methyladenosine(58) in tRNA + 2-oxoglutarate + O2 = adenosine(58) in tRNA + formaldehyde + succinate + CO2. Dioxygenase that acts as on nucleic acids, such as DNA and tRNA. Requires molecular oxygen, alpha-ketoglutarate and iron. Mainly acts as a tRNA demethylase by removing N(1)-methyladenine from various tRNAs, with a preference for N(1)-methyladenine at position 58 (m1A58) present on a stem loop structure of tRNAs. Acts as a regulator of translation initiation and elongation. Does not appear to possess DNA repair activity; no activity towards methylated DNA or etheno adducts. Exhibits a weak and unstable DNA lyase activity; this activity is probably not biologically significant and proceeds by a mechanism different from the classical dioxygenase reaction as it does not require 2-oxoglutarate or iron. This chain is tRNA demethylase abh1 (abh1), found in Schizosaccharomyces pombe (strain 972 / ATCC 24843) (Fission yeast).